The sequence spans 125 residues: Small ribosomal subunit protein uS13 (125 aa).

A disordered region spans residues 92–125 (RRSLPVRGQRTRTNARTRKGKRKTVAGKKKAVKK).

Belongs to the universal ribosomal protein uS13 family. As to quaternary structure, part of the 30S ribosomal subunit. Forms a loose heterodimer with protein S19. Forms two bridges to the 50S subunit in the 70S ribosome.

In terms of biological role, located at the top of the head of the 30S subunit, it contacts several helices of the 16S rRNA. In the 70S ribosome it contacts the 23S rRNA (bridge B1a) and protein L5 of the 50S subunit (bridge B1b), connecting the 2 subunits; these bridges are implicated in subunit movement. Contacts the tRNAs in the A and P-sites. In Pelodictyon phaeoclathratiforme (strain DSM 5477 / BU-1), this protein is Small ribosomal subunit protein uS13.